A 363-amino-acid chain; its full sequence is 3-dehydroquinate synthase (363 aa).

Residues 134–135 (TT), K147, and K156 contribute to the NAD(+) site. Zn(2+)-binding residues include E189, H254, and H271.

This sequence belongs to the sugar phosphate cyclases superfamily. Dehydroquinate synthase family. The cofactor is Co(2+). It depends on Zn(2+) as a cofactor. NAD(+) serves as cofactor.

It is found in the cytoplasm. The catalysed reaction is 7-phospho-2-dehydro-3-deoxy-D-arabino-heptonate = 3-dehydroquinate + phosphate. The protein operates within metabolic intermediate biosynthesis; chorismate biosynthesis; chorismate from D-erythrose 4-phosphate and phosphoenolpyruvate: step 2/7. Catalyzes the conversion of 3-deoxy-D-arabino-heptulosonate 7-phosphate (DAHP) to dehydroquinate (DHQ). The sequence is that of 3-dehydroquinate synthase from Prochlorococcus marinus (strain AS9601).